Consider the following 453-residue polypeptide: Midnolin (453 aa).

The Ubiquitin-like domain maps to Met-20 to Gly-94. Disordered stretches follow at residues His-185–Val-219, Pro-231–Lys-256, Ser-330–Asn-374, and Gln-390–Glu-434. Low complexity-rich tracts occupy residues Ser-188–Ser-204 and Ser-239–Ser-252. Polar residues predominate over residues Ser-330–Cys-362. Residues Ser-365–Asn-374 show a composition bias toward basic and acidic residues. Residues Gln-390–Arg-399 show a composition bias toward basic residues. Over residues Arg-415–Ser-428 the composition is skewed to low complexity.

It localises to the nucleus. It is found in the cytoplasm. Its subcellular location is the cytosol. The protein resides in the nucleolus. Its function is as follows. Facilitates ubiquitin-independent proteasomal degradation of polycomb protein CBX4. Plays a role in inhibiting the activity of glucokinase GCK and both glucose-induced and basal insulin secretion. This is Midnolin (midn) from Xenopus tropicalis (Western clawed frog).